Here is a 328-residue protein sequence, read N- to C-terminus: tRNA uridine(34) hydroxylase (328 aa).

The Rhodanese domain occupies 130-224 (LDKDTVVLDT…YGKDPEVQGE (95 aa)). The Cysteine persulfide intermediate role is filled by Cys-184.

Belongs to the TrhO family.

It carries out the reaction uridine(34) in tRNA + AH2 + O2 = 5-hydroxyuridine(34) in tRNA + A + H2O. Its function is as follows. Catalyzes oxygen-dependent 5-hydroxyuridine (ho5U) modification at position 34 in tRNAs. The polypeptide is tRNA uridine(34) hydroxylase (Streptococcus pneumoniae (strain Hungary19A-6)).